A 461-amino-acid chain; its full sequence is Growth/differentiation factor 7 (461 aa).

An N-terminal signal peptide occupies residues 1-19; the sequence is MDLSAAAALCLWLLSACRP. Residues 20 to 315 constitute a propeptide that is removed on maturation; it reads RDGLEAAAVL…ANLGGRRRRR (296 aa). Residue asparagine 79 is glycosylated (N-linked (GlcNAc...) asparagine). Residues 287–360 form a disordered region; that stretch reads LRAAAEPPPD…GHGRRGRSRC (74 aa). The span at 323-350 shows a compositional bias: gly residues; that stretch reads GAQGSGGGGGGGGGGGGGGGGGGGGAGR. Residues 351 to 360 are compositionally biased toward basic residues; the sequence is GHGRRGRSRC. 3 disulfides stabilise this stretch: cysteine 360–cysteine 426, cysteine 389–cysteine 458, and cysteine 393–cysteine 460.

Belongs to the TGF-beta family. In terms of assembly, homodimer; disulfide-linked.

Its subcellular location is the secreted. The polypeptide is Growth/differentiation factor 7 (Gdf7) (Mus musculus (Mouse)).